Here is a 130-residue protein sequence, read N- to C-terminus: Protein ApaG (130 aa).

The ApaG domain occupies 3 to 127; the sequence is SAVTRGIEVT…FSLDVPEQRR (125 aa).

The chain is Protein ApaG from Brucella canis (strain ATCC 23365 / NCTC 10854 / RM-666).